Consider the following 356-residue polypeptide: Poly(rC)-binding protein 1 (356 aa).

Met1 is subject to N-acetylmethionine. KH domains lie at 13-75 and 97-162; these read TLTI…FAMI and PVTL…VKQI. Lys115 is covalently cross-linked (Glycyl lysine isopeptide (Lys-Gly) (interchain with G-Cter in SUMO2)). Ser173, Ser189, Ser190, Ser246, Ser264, and Ser273 each carry phosphoserine. The KH 3 domain occupies 279–343; it reads QTTHELTIPN…ASISLAQYLI (65 aa).

In terms of processing, phosphorylated; lowers poly(rC)-binding activity.

It localises to the nucleus. The protein resides in the cytoplasm. Functionally, single-stranded nucleic acid binding protein that binds preferentially to oligo dC. Together with PCBP2, required for erythropoiesis, possibly by regulating mRNA splicing. This is Poly(rC)-binding protein 1 (PCBP1) from Bos taurus (Bovine).